The sequence spans 279 residues: Energy-coupling factor transporter ATP-binding protein EcfA1 (279 aa).

An ABC transporter domain is found at 5-240 (IELKKVTFNY…GDELLQLGLD (236 aa)). 40-47 (GHNGSGKS) lines the ATP pocket.

The protein belongs to the ABC transporter superfamily. Energy-coupling factor EcfA family. In terms of assembly, forms a stable energy-coupling factor (ECF) transporter complex composed of 2 membrane-embedded substrate-binding proteins (S component), 2 ATP-binding proteins (A component) and 2 transmembrane proteins (T component).

Its subcellular location is the cell membrane. In terms of biological role, ATP-binding (A) component of a common energy-coupling factor (ECF) ABC-transporter complex. Unlike classic ABC transporters this ECF transporter provides the energy necessary to transport a number of different substrates. The chain is Energy-coupling factor transporter ATP-binding protein EcfA1 from Streptococcus pyogenes serotype M28 (strain MGAS6180).